The primary structure comprises 478 residues: MSPPLLKLGAVLSTMAMISNWMSQTLPSLVGLNTTRLSTPDTLTQISPKEGWQVYSSAQDPDGRCICTVVAPEQNLCSRDAKSRQLRQLLEKVQNMSQSIEVLNLRTQRDFQYVLKMETQMKGLKAKFRQIEDDRKTLMTKHFQELKEKMDELLPLIPVLEQYKTDAKLITQFKEEIRNLSAVLTGIQEEIGAYDYEELHQRVLSLETRLRDCMKKLTCGKLMKITGPVTVKTSGTRFGAWMTDPLASEKNNRVWYMDSYTNNKIVREYKSIADFVSGAESRTYNLPFKWAGTNHVVYNGSLYFNKYQSNIIIKYSFDMGRVLAQRSLEYAGFHNVYPYTWGGFSDIDLMADEIGLWAVYATNQNAGNIVISQLNQDTLEVMKSWSTGYPKRSAGESFMICGTLYVTNSHLTGAKVYYSYSTKTSTYEYTDIPFHNQYFHISMLDYNARDRALYAWNNGHQVLFNVTLFHIIKTEDDT.

The first 23 residues, 1 to 23 (MSPPLLKLGAVLSTMAMISNWMS), serve as a signal peptide directing secretion. Asn-33, Asn-95, Asn-179, Asn-299, and Asn-465 each carry an N-linked (GlcNAc...) asparagine glycan. The stretch at 77–217 (CSRDAKSRQL…TRLRDCMKKL (141 aa)) forms a coiled coil. Positions 218 to 470 (TCGKLMKITG…QVLFNVTLFH (253 aa)) constitute an Olfactomedin-like domain. A disulfide bridge links Cys-219 with Cys-401.

Peripherally associated with AMPAR complex. AMPAR complex consists of an inner core made of 4 pore-forming GluA/GRIA proteins (GRIA1, GRIA2, GRIA3 and GRIA4) and 4 major auxiliary subunits arranged in a twofold symmetry. One of the two pairs of distinct binding sites is occupied either by CNIH2, CNIH3 or CACNG2, CACNG3. The other harbors CACNG2, CACNG3, CACNG4, CACNG8 or GSG1L. This inner core of AMPAR complex is complemented by outer core constituents binding directly to the GluA/GRIA proteins at sites distinct from the interaction sites of the inner core constituents. Outer core constituents include at least PRRT1, PRRT2, CKAMP44/SHISA9, FRRS1L and NRN1. The proteins of the inner and outer core serve as a platform for other, more peripherally associated AMPAR constituents, including OLFM3. Alone or in combination, these auxiliary subunits control the gating and pharmacology of the AMPAR complex and profoundly impact their biogenesis and protein processing. Homodimer. Interacts with MYOC. Interacts with OLFM2. In the eye, expressed in trabecular meshwork and neural retina; in non-ocular tissues, expressed in brain and lung.

The protein resides in the secreted. It is found in the synapse. The sequence is that of Noelin-3 (OLFM3) from Homo sapiens (Human).